A 481-amino-acid chain; its full sequence is UDP-N-acetylmuramoyl-L-alanyl-D-glutamate--L-lysine ligase (481 aa).

S42 is a UDP-N-acetyl-alpha-D-muramoyl-L-alanyl-D-glutamate binding site. 118–124 (GTKGKTT) lines the ATP pocket. Residues Q158, 160–161 (TT), S187, and R195 contribute to the UDP-N-acetyl-alpha-D-muramoyl-L-alanyl-D-glutamate site. The residue at position 229 (K229) is an N6-carboxylysine. Positions 404–407 (DDPN) match the L-lysine recognition motif motif.

This sequence belongs to the MurCDEF family. MurE subfamily. In terms of processing, carboxylation is probably crucial for Mg(2+) binding and, consequently, for the gamma-phosphate positioning of ATP.

It localises to the cytoplasm. The enzyme catalyses UDP-N-acetyl-alpha-D-muramoyl-L-alanyl-D-glutamate + L-lysine + ATP = UDP-N-acetyl-alpha-D-muramoyl-L-alanyl-gamma-D-glutamyl-L-lysine + ADP + phosphate + H(+). It functions in the pathway cell wall biogenesis; peptidoglycan biosynthesis. Its function is as follows. Catalyzes the addition of L-lysine to the nucleotide precursor UDP-N-acetylmuramoyl-L-alanyl-D-glutamate (UMAG) in the biosynthesis of bacterial cell-wall peptidoglycan. The chain is UDP-N-acetylmuramoyl-L-alanyl-D-glutamate--L-lysine ligase from Streptococcus pyogenes serotype M6 (strain ATCC BAA-946 / MGAS10394).